The primary structure comprises 443 residues: Chromosomal replication initiator protein DnaA (443 aa).

The segment at 1-75 (MNTQLNEIWQ…AIKQVTFKEY (75 aa)) is domain I, interacts with DnaA modulators. The interval 75 to 105 (YEIAFIVPSQENLNKLTKQTESAGNEDSPLS) is domain II. A domain III, AAA+ region region spans residues 106-321 (VLNPKYTFDT…GALNRVIAYS (216 aa)). ATP is bound by residues G150, G152, K153, and T154. The tract at residues 322–443 (SLTENEITVE…SEIKRNLLGK (122 aa)) is domain IV, binds dsDNA.

Belongs to the DnaA family. In terms of assembly, oligomerizes as a right-handed, spiral filament on DNA at oriC.

The protein localises to the cytoplasm. Its function is as follows. Plays an essential role in the initiation and regulation of chromosomal replication. ATP-DnaA binds to the origin of replication (oriC) to initiate formation of the DNA replication initiation complex once per cell cycle. Binds the DnaA box (a 9 base pair repeat at the origin) and separates the double-stranded (ds)DNA. Forms a right-handed helical filament on oriC DNA; dsDNA binds to the exterior of the filament while single-stranded (ss)DNA is stabiized in the filament's interior. The ATP-DnaA-oriC complex binds and stabilizes one strand of the AT-rich DNA unwinding element (DUE), permitting loading of DNA polymerase. After initiation quickly degrades to an ADP-DnaA complex that is not apt for DNA replication. Binds acidic phospholipids. The sequence is that of Chromosomal replication initiator protein DnaA from Acetivibrio thermocellus (strain ATCC 27405 / DSM 1237 / JCM 9322 / NBRC 103400 / NCIMB 10682 / NRRL B-4536 / VPI 7372) (Clostridium thermocellum).